A 288-amino-acid chain; its full sequence is Transposase for insertion sequence element IS1106 (288 aa).

This sequence belongs to the transposase 11 family.

Its function is as follows. Involved in the transposition of the insertion sequence. This chain is Transposase for insertion sequence element IS1106, found in Neisseria meningitidis serogroup B.